The chain runs to 548 residues: Membrane protein insertase YidC (548 aa).

Residues 6–26 (NLLVIALLFVSFMIWQAWEQD) traverse the membrane as a helical segment. The tract at residues 28 to 55 (NPQPQAQQTTQTTTTAAGSAADQGVPAS) is disordered. A compositionally biased stretch (low complexity) spans 30-50 (QPQAQQTTQTTTTAAGSAADQ). The next 4 membrane-spanning stretches (helical) occupy residues 350-370 (FVGNWGFSIIIITFIVRGIMY), 420-440 (LGGCFPLLIQMPIFLALYYML), 458-478 (LSAQDPYYILPILMGVTMFFI), and 499-519 (PVIFTVFFLWFPSGLVLYYIV).

This sequence belongs to the OXA1/ALB3/YidC family. Type 1 subfamily. Interacts with the Sec translocase complex via SecD. Specifically interacts with transmembrane segments of nascent integral membrane proteins during membrane integration.

The protein resides in the cell inner membrane. Its function is as follows. Required for the insertion and/or proper folding and/or complex formation of integral membrane proteins into the membrane. Involved in integration of membrane proteins that insert both dependently and independently of the Sec translocase complex, as well as at least some lipoproteins. Aids folding of multispanning membrane proteins. The protein is Membrane protein insertase YidC of Escherichia coli O139:H28 (strain E24377A / ETEC).